Reading from the N-terminus, the 236-residue chain is Nopaline transport system permease protein NocQ (236 aa).

In terms of domain architecture, ABC transmembrane type-1 spans 21-222 (AMMTVVVAAC…LLSSVSNRGF (202 aa)). Transmembrane regions (helical) follow at residues 25–45 (VVVAACSYFFGIIFGSLFAAA), 63–83 (VVRGVPELLIIFLVFFGGGTL), 102–122 (IFVIGVLCISVSAGAYATEVI), and 199–219 (QPFTFYITAFVIFLLLSSVSN).

The protein belongs to the binding-protein-dependent transport system permease family. HisMQ subfamily.

The protein resides in the cell inner membrane. Component of the nopaline active transport system probably consisting of four subunits: Q, M, P and T. This system is also capable of transporting octopine provided that catabolic functions are induced with nopaline. This is Nopaline transport system permease protein NocQ (nocQ) from Agrobacterium fabrum (strain C58 / ATCC 33970) (Agrobacterium tumefaciens (strain C58)).